A 477-amino-acid polypeptide reads, in one-letter code: Putative WAS protein family homolog 4 (477 aa).

The segment at 1 to 180 is WHD1; that stretch reads MSGVMCLKAS…EGLGGLPSNI (180 aa). Disordered stretches follow at residues 310-420 and 434-477; these read QDGV…QGGH and KGIS…DWES. A compositionally biased stretch (pro residues) spans 315–327; sequence TPPPPPPPPPPAP. A VCA region spans residues 362–477; the sequence is QGAPREVVDP…QAEDEDDWES (116 aa). Residues 374–396 enclose the WH2 domain; it reads GWATLLESIRQAGGIGKAKLRSM. Basic and acidic residues predominate over residues 395–411; that stretch reads SMKERKLEKQQQKEQEQ. The segment covering 437–449 has biased composition (gly residues); it reads SGKGPGAGDGPGG.

It belongs to the WASH1 family. In terms of assembly, interacts (via WHD1 region) with WASHC2C; the interaction is direct.

It is found in the early endosome membrane. The protein localises to the recycling endosome membrane. Functionally, may act as a nucleation-promoting factor at the surface of endosomes, where it recruits and activates the Arp2/3 complex to induce actin polymerization, playing a key role in the fission of tubules that serve as transport intermediates during endosome sorting. The sequence is that of Putative WAS protein family homolog 4 (WASH4P) from Homo sapiens (Human).